The following is a 167-amino-acid chain: tRNA-specific adenosine deaminase (167 aa).

The CMP/dCMP-type deaminase domain occupies 6 to 117 (FSHEYWMRHA…DAKTGAAGSL (112 aa)). H57 contributes to the Zn(2+) binding site. The active-site Proton donor is the E59. Residues C87 and C90 each contribute to the Zn(2+) site.

Belongs to the cytidine and deoxycytidylate deaminase family. Homodimer. It depends on Zn(2+) as a cofactor.

The catalysed reaction is adenosine(34) in tRNA + H2O + H(+) = inosine(34) in tRNA + NH4(+). Catalyzes the deamination of adenosine to inosine at the wobble position 34 of tRNA(Arg2). Essential for cell viability. This Escherichia coli (strain K12) protein is tRNA-specific adenosine deaminase.